Here is a 1987-residue protein sequence, read N- to C-terminus: Transcriptional activator DEMETER (1987 aa).

Disordered stretches follow at residues 246-378 (TGHE…NKSP), 392-415 (DLEN…SSGA), and 793-901 (MPPE…GPSG). Polar residues predominate over residues 258 to 277 (SMQSIMDSSAVNATEATEQN). The segment covering 341 to 364 (ATQEKVKSKETGSAKKKNLKESAT) has biased composition (basic and acidic residues). The span at 813-829 (NTASISKGASKGNSSPV) shows a compositional bias: polar residues. Residues 844–855 (PAKKGRAGRKKS) are compositionally biased toward basic residues. The DEMETER stretch occupies residues 955 to 1054 (KVDIDDETTR…AFMSLAARFP (100 aa)). 2 disordered regions span residues 1324-1351 (LPGM…QDEM) and 1439-1471 (TLAD…KNNM). Basic and acidic residues-rich tracts occupy residues 1338-1351 (EHQD…QDEM) and 1452-1469 (SLRK…RNKN). [4Fe-4S] cluster contacts are provided by Cys1629, Cys1636, Cys1639, and Cys1645.

This sequence belongs to the DNA glycosylase family. DEMETER subfamily. Requires [4Fe-4S] cluster as cofactor. As to expression, mainly expressed in immature flower buds, then decreases as the flower matures. Expressed in the ovule carpels, but not expressed in pollen stamens. Expressed in developing and mature ovules (stages 12-14), then strongly decreases after fertilization.

The protein resides in the nucleus. Functionally, transcriptional activator involved in gene imprinting. Catalyzes the release of 5-methylcytosine (5-meC) from DNA by a glycosylase/lyase mechanism. Allows the expression of the maternal copy of the imprinted MEA gene before fertilization, possibly by antagonizing or suppressing DNA methylation on target promoter. Probably acts by nicking the MEA promoter. Required for stable reproducible patterns of floral and vegetative development. The sequence is that of Transcriptional activator DEMETER (DME) from Arabidopsis thaliana (Mouse-ear cress).